Consider the following 133-residue polypeptide: uncharacterized protein (133 aa).

A signal peptide spans 1–23; the sequence is MSRKIIPALTIFFGPILILTAIT. The segment at 82 to 133 is disordered; that stretch reads ESIKNQNSLNKEKQQQQQQQQQQQQQQQQQQQQQQKPNTPPTPLTTPSTPKK. The span at 96 to 118 shows a compositional bias: low complexity; it reads QQQQQQQQQQQQQQQQQQQQQKP.

It is found in the secreted. This is an uncharacterized protein from Dictyostelium discoideum (Social amoeba).